A 228-amino-acid chain; its full sequence is L-ribulose-5-phosphate 4-epimerase UlaF (228 aa).

Residues 26–27 (GN), 43–44 (SG), and 72–73 (SS) contribute to the substrate site. Residues Asp74, His93, and His95 each coordinate Zn(2+). Catalysis depends on Asp118, which acts as the Proton donor/acceptor. His167 contributes to the Zn(2+) binding site. Tyr225 serves as the catalytic Proton donor/acceptor.

The protein belongs to the aldolase class II family. AraD/FucA subfamily. Requires Zn(2+) as cofactor.

It carries out the reaction L-ribulose 5-phosphate = D-xylulose 5-phosphate. It participates in cofactor degradation; L-ascorbate degradation; D-xylulose 5-phosphate from L-ascorbate: step 4/4. In terms of biological role, catalyzes the isomerization of L-ribulose 5-phosphate to D-xylulose 5-phosphate. Is involved in the anaerobic L-ascorbate utilization. The polypeptide is L-ribulose-5-phosphate 4-epimerase UlaF (Escherichia coli O6:K15:H31 (strain 536 / UPEC)).